Here is a 187-residue protein sequence, read N- to C-terminus: Peptide deformylase (187 aa).

Fe cation-binding residues include C94 and H136. Residue E137 is part of the active site. Residue H140 participates in Fe cation binding.

It belongs to the polypeptide deformylase family. It depends on Fe(2+) as a cofactor.

The catalysed reaction is N-terminal N-formyl-L-methionyl-[peptide] + H2O = N-terminal L-methionyl-[peptide] + formate. Its function is as follows. Removes the formyl group from the N-terminal Met of newly synthesized proteins. Requires at least a dipeptide for an efficient rate of reaction. N-terminal L-methionine is a prerequisite for activity but the enzyme has broad specificity at other positions. In Chlorobaculum tepidum (strain ATCC 49652 / DSM 12025 / NBRC 103806 / TLS) (Chlorobium tepidum), this protein is Peptide deformylase.